Reading from the N-terminus, the 253-residue chain is Ubiquinone/menaquinone biosynthesis C-methyltransferase UbiE (253 aa).

S-adenosyl-L-methionine-binding positions include Thr76, Asp97, and 125–126; that span reads NA.

The protein belongs to the class I-like SAM-binding methyltransferase superfamily. MenG/UbiE family.

The catalysed reaction is a 2-demethylmenaquinol + S-adenosyl-L-methionine = a menaquinol + S-adenosyl-L-homocysteine + H(+). It carries out the reaction a 2-methoxy-6-(all-trans-polyprenyl)benzene-1,4-diol + S-adenosyl-L-methionine = a 5-methoxy-2-methyl-3-(all-trans-polyprenyl)benzene-1,4-diol + S-adenosyl-L-homocysteine + H(+). It participates in quinol/quinone metabolism; menaquinone biosynthesis; menaquinol from 1,4-dihydroxy-2-naphthoate: step 2/2. Its pathway is cofactor biosynthesis; ubiquinone biosynthesis. In terms of biological role, methyltransferase required for the conversion of demethylmenaquinol (DMKH2) to menaquinol (MKH2) and the conversion of 2-polyprenyl-6-methoxy-1,4-benzoquinol (DDMQH2) to 2-polyprenyl-3-methyl-6-methoxy-1,4-benzoquinol (DMQH2). The protein is Ubiquinone/menaquinone biosynthesis C-methyltransferase UbiE of Rhodopseudomonas palustris (strain ATCC BAA-98 / CGA009).